We begin with the raw amino-acid sequence, 292 residues long: L-serine dehydratase, alpha chain (292 aa).

This sequence belongs to the iron-sulfur dependent L-serine dehydratase family. As to quaternary structure, heterooctamer of four alpha chains and four beta chains. It depends on [4Fe-4S] cluster as a cofactor.

The enzyme catalyses L-serine = pyruvate + NH4(+). The protein operates within carbohydrate biosynthesis; gluconeogenesis. This is L-serine dehydratase, alpha chain (sdhA) from Peptoniphilus asaccharolyticus (Peptostreptococcus asaccharolyticus).